A 365-amino-acid chain; its full sequence is Anhydro-N-acetylmuramic acid kinase (365 aa).

Gly-9 to Asp-16 lines the ATP pocket.

The protein belongs to the anhydro-N-acetylmuramic acid kinase family.

The catalysed reaction is 1,6-anhydro-N-acetyl-beta-muramate + ATP + H2O = N-acetyl-D-muramate 6-phosphate + ADP + H(+). The protein operates within amino-sugar metabolism; 1,6-anhydro-N-acetylmuramate degradation. It functions in the pathway cell wall biogenesis; peptidoglycan recycling. Catalyzes the specific phosphorylation of 1,6-anhydro-N-acetylmuramic acid (anhMurNAc) with the simultaneous cleavage of the 1,6-anhydro ring, generating MurNAc-6-P. Is required for the utilization of anhMurNAc either imported from the medium or derived from its own cell wall murein, and thus plays a role in cell wall recycling. The chain is Anhydro-N-acetylmuramic acid kinase from Zymomonas mobilis subsp. mobilis (strain ATCC 31821 / ZM4 / CP4).